The following is a 404-amino-acid chain: Propionate kinase PduW (404 aa).

The protein belongs to the acetokinase family. PduW subfamily.

It localises to the cytoplasm. The catalysed reaction is propanoate + ATP = propanoyl phosphate + ADP. It participates in polyol metabolism; 1,2-propanediol degradation. Its pathway is organic acid metabolism; propanoate degradation. Its function is as follows. Works with phosphate acetyltransferase (pta) to capture exogenous propionate and regenerate propionyl-CoA during degradation of propionate and 1,2-propanediol (1,2-PD). Ectopic expression partially complements a cobB deletion allowing some growth on propionate. Restores growth to an eutQ deletion on ethanolamine and tetrathionate under anoxic conditions. This is Propionate kinase PduW from Salmonella typhimurium (strain LT2 / SGSC1412 / ATCC 700720).